A 431-amino-acid polypeptide reads, in one-letter code: Tol-Pal system protein TolB (431 aa).

A signal peptide spans methionine 1–alanine 24. Residues glutamine 318–isoleucine 340 are disordered. Over residues serine 323–valine 332 the composition is skewed to low complexity.

This sequence belongs to the TolB family. As to quaternary structure, the Tol-Pal system is composed of five core proteins: the inner membrane proteins TolA, TolQ and TolR, the periplasmic protein TolB and the outer membrane protein Pal. They form a network linking the inner and outer membranes and the peptidoglycan layer.

The protein localises to the periplasm. Its function is as follows. Part of the Tol-Pal system, which plays a role in outer membrane invagination during cell division and is important for maintaining outer membrane integrity. This chain is Tol-Pal system protein TolB, found in Mannheimia succiniciproducens (strain KCTC 0769BP / MBEL55E).